Here is a 72-residue protein sequence, read N- to C-terminus: Disintegrin cotiarin (72 aa).

The region spanning 1–72 (EAGEECDCGA…SADCPRNRFH (72 aa)) is the Disintegrin domain. 6 cysteine pairs are disulfide-bonded: cysteine 6–cysteine 21, cysteine 8–cysteine 16, cysteine 15–cysteine 38, cysteine 29–cysteine 35, cysteine 34–cysteine 59, and cysteine 47–cysteine 66. Positions 51 to 53 (RGD) match the Cell attachment site motif. The tract at residues 51–72 (RGDNPDDRCTGQSADCPRNRFH) is disordered.

The protein belongs to the venom metalloproteinase (M12B) family. P-II subfamily. P-IIa sub-subfamily. In terms of assembly, monomer. Expressed by the venom gland.

It is found in the secreted. Functionally, inhibits fibrinogen interaction with platelets. Acts by binding to alpha-IIb/beta-3 (ITGA2B/ITGB3) on the platelet surface and inhibits aggregation induced by ADP, thrombin, platelet-activating factor and collagen. This Bothrops cotiara (Cotiara) protein is Disintegrin cotiarin.